Consider the following 192-residue polypeptide: Protein GrpE (192 aa).

The tract at residues 1-41 is disordered; the sequence is MSKEEFPHEKDLKDEVTPDKAPKKDPKAAPKEEVKENPVEN.

Belongs to the GrpE family. In terms of assembly, homodimer.

Its subcellular location is the cytoplasm. Functionally, participates actively in the response to hyperosmotic and heat shock by preventing the aggregation of stress-denatured proteins, in association with DnaK and GrpE. It is the nucleotide exchange factor for DnaK and may function as a thermosensor. Unfolded proteins bind initially to DnaJ; upon interaction with the DnaJ-bound protein, DnaK hydrolyzes its bound ATP, resulting in the formation of a stable complex. GrpE releases ADP from DnaK; ATP binding to DnaK triggers the release of the substrate protein, thus completing the reaction cycle. Several rounds of ATP-dependent interactions between DnaJ, DnaK and GrpE are required for fully efficient folding. This chain is Protein GrpE, found in Lactobacillus johnsonii (strain CNCM I-12250 / La1 / NCC 533).